Reading from the N-terminus, the 499-residue chain is Glycerol kinase (499 aa).

Residue T13 participates in ADP binding. 3 residues coordinate ATP: T13, T14, and S15. Position 13 (T13) interacts with sn-glycerol 3-phosphate. R17 contributes to the ADP binding site. Residues R83, E84, Y135, and D244 each coordinate sn-glycerol 3-phosphate. Residues R83, E84, Y135, D244, and Q245 each coordinate glycerol. ADP contacts are provided by T266 and G310. The ATP site is built by T266, G310, Q314, and G411. Residues G411 and N415 each coordinate ADP.

This sequence belongs to the FGGY kinase family.

The enzyme catalyses glycerol + ATP = sn-glycerol 3-phosphate + ADP + H(+). It participates in polyol metabolism; glycerol degradation via glycerol kinase pathway; sn-glycerol 3-phosphate from glycerol: step 1/1. Inhibited by fructose 1,6-bisphosphate (FBP). Functionally, key enzyme in the regulation of glycerol uptake and metabolism. Catalyzes the phosphorylation of glycerol to yield sn-glycerol 3-phosphate. This is Glycerol kinase from Pseudothermotoga lettingae (strain ATCC BAA-301 / DSM 14385 / NBRC 107922 / TMO) (Thermotoga lettingae).